Consider the following 183-residue polypeptide: ATP synthase subunit b, chloroplastic (183 aa).

The chain crosses the membrane as a helical span at residues 33–51; the sequence is IINLSVVIGVVVSFGGDAL.

Belongs to the ATPase B chain family. In terms of assembly, F-type ATPases have 2 components, F(1) - the catalytic core - and F(0) - the membrane proton channel. F(1) has five subunits: alpha(3), beta(3), gamma(1), delta(1), epsilon(1). F(0) has four main subunits: a(1), b(1), b'(1) and c(10-14). The alpha and beta chains form an alternating ring which encloses part of the gamma chain. F(1) is attached to F(0) by a central stalk formed by the gamma and epsilon chains, while a peripheral stalk is formed by the delta, b and b' chains.

The protein localises to the plastid. The protein resides in the chloroplast thylakoid membrane. Functionally, f(1)F(0) ATP synthase produces ATP from ADP in the presence of a proton or sodium gradient. F-type ATPases consist of two structural domains, F(1) containing the extramembraneous catalytic core and F(0) containing the membrane proton channel, linked together by a central stalk and a peripheral stalk. During catalysis, ATP synthesis in the catalytic domain of F(1) is coupled via a rotary mechanism of the central stalk subunits to proton translocation. Component of the F(0) channel, it forms part of the peripheral stalk, linking F(1) to F(0). This is ATP synthase subunit b, chloroplastic from Oltmannsiellopsis viridis (Marine flagellate).